Consider the following 85-residue polypeptide: Small ribosomal subunit protein uS17 (85 aa).

This sequence belongs to the universal ribosomal protein uS17 family. As to quaternary structure, part of the 30S ribosomal subunit.

One of the primary rRNA binding proteins, it binds specifically to the 5'-end of 16S ribosomal RNA. This chain is Small ribosomal subunit protein uS17, found in Geobacter sp. (strain M21).